A 424-amino-acid chain; its full sequence is MHRCMPLVAASMAALMLAGCGGGDGDTTLSTAAATDTTTLKTAATTSISPLWLTIAKDSAAFTVSGTRTVRYGAGSAWVAKSMSGTGQCTAAFFGKDPAAGVAKVCQVAQGTGTLLWRGVSLAGAEFGEGSLPGTYGSNYIYPSADSATYYKNKGMNLVRLPFRWERLQPTLNQALDANELSRLTGFVNAVTAAGQTVLLDPHNYARYYGNVIGSSAVPNSAYADFWRRVATQFKGNARVIFGLMNEPNSMPTEQWLSGANAALAAIRSANASNVVFVPGNAWTGAHSWNQNWYGTPNGTVMKGINDPGRNLVFEVHQYLDGDSSGQSASCVSATIGAERLQDFTNWLRSNGYRGFLGEFGAASNDTCNQAVANMLTFVKNNADVWTGWAWWAGGPWWGGYMYSIEPSNGVDKPQMSVLAPYLK.

Positions 1 to 19 are cleaved as a signal peptide; sequence MHRCMPLVAASMAALMLAG. Residue C20 is the site of N-palmitoyl cysteine attachment. C20 carries S-diacylglycerol cysteine lipidation. A propeptide spanning residues 20–43 is cleaved from the precursor; sequence CGGGDGDTTLSTAAATDTTTLKTA. The active-site Proton donor is the E247. Catalysis depends on E359, which acts as the Nucleophile.

It belongs to the glycosyl hydrolase 5 (cellulase A) family.

The protein resides in the cell membrane. The enzyme catalyses Endohydrolysis of (1-&gt;4)-beta-D-glucosidic linkages in cellulose, lichenin and cereal beta-D-glucans.. The polypeptide is Endoglucanase (egl) (Ralstonia nicotianae (strain ATCC BAA-1114 / GMI1000) (Ralstonia solanacearum)).